The chain runs to 242 residues: Segregation and condensation protein A (242 aa).

Belongs to the ScpA family. In terms of assembly, component of a cohesin-like complex composed of ScpA, ScpB and the Smc homodimer, in which ScpA and ScpB bind to the head domain of Smc. The presence of the three proteins is required for the association of the complex with DNA.

Its subcellular location is the cytoplasm. Its function is as follows. Participates in chromosomal partition during cell division. May act via the formation of a condensin-like complex containing Smc and ScpB that pull DNA away from mid-cell into both cell halves. This Lactococcus lactis subsp. lactis (strain IL1403) (Streptococcus lactis) protein is Segregation and condensation protein A.